The following is a 624-amino-acid chain: Actin-related protein 8 (624 aa).

Met1 is modified (N-acetylmethionine). Over residues 1–25 (MTQAEKGDTENGKEKGGEKEKEQRG) the composition is skewed to basic and acidic residues. The interval 1–29 (MTQAEKGDTENGKEKGGEKEKEQRGVKRP) is disordered. Positions 55 and 56 each coordinate ATP. Ser132 carries the phosphoserine modification. Residue 283 to 286 (DVGD) coordinates ATP. Ser412 carries the post-translational modification Phosphoserine. Positions 430–462 (SKQEQSAKATADRKSASKPIGFEGDLRGQSSDL) are disordered.

It belongs to the actin family. ARP8 subfamily. Component of the chromatin remodeling INO80 complex; specifically part of a complex module associated with the DBINO domain of INO80. Exists as monomers and dimers, but the dimer is most probably the biologically relevant form required for stable interactions with histones that exploits the twofold symmetry of the nucleosome core.

The protein localises to the nucleus. It localises to the chromosome. Functionally, plays an important role in the functional organization of mitotic chromosomes. Exhibits low basal ATPase activity, and unable to polymerize. Its function is as follows. Proposed core component of the chromatin remodeling INO80 complex which is involved in transcriptional regulation, DNA replication and probably DNA repair. Required for the recruitment of INO80 (and probably the INO80 complex) to sites of DNA damage Strongly prefer nucleosomes and H3-H4 tetramers over H2A-H2B dimers, suggesting it may act as a nucleosome recognition module within the complex. This is Actin-related protein 8 (ACTR8) from Pongo abelii (Sumatran orangutan).